Consider the following 64-residue polypeptide: MSGRQGGKAKPLKAAKKTEKDLSEEDVEFKKKQQEEAKKIKEMAAKAGQRGPLLGGGIKKSGKK.

Residues 1 to 64 (MSGRQGGKAK…GGGIKKSGKK (64 aa)) form a disordered region. Residues 21 to 50 (DLSEEDVEFKKKQQEEAKKIKEMAAKAGQR) are a coiled coil. Positions 28–44 (EFKKKQQEEAKKIKEMA) are enriched in basic and acidic residues. A compositionally biased stretch (gly residues) spans 53–64 (LLGGGIKKSGKK).

Belongs to the TMA7 family.

This Caenorhabditis elegans protein is Translation machinery-associated protein 7 homolog.